A 204-amino-acid chain; its full sequence is MKKQEQNQFLKEFGISLIKMFPKYIDKAIYSKGELTLHVKPTNLIALMKILKNHTNCQFKSLSDLCAVDFPEKKERFEIVYNLLSVRYNSRIRVKTFVDELTPVPSVTCLFQAAGWFEREVWDLFGVYFTNHPDLRRILTDYGFEGHPMRKDFPLTGYVEVRYDDEQKRVVTESLEMTQEFRSFNFTSPWEQIEISKPNIKEKK.

The protein belongs to the complex I 30 kDa subunit family. In terms of assembly, complex I is composed of about 30 different subunits.

Its subcellular location is the mitochondrion inner membrane. It carries out the reaction a ubiquinone + NADH + 5 H(+)(in) = a ubiquinol + NAD(+) + 4 H(+)(out). Functionally, core subunit of the mitochondrial membrane respiratory chain NADH dehydrogenase (Complex I) that is believed to belong to the minimal assembly required for catalysis. Complex I functions in the transfer of electrons from NADH to the respiratory chain. The immediate electron acceptor for the enzyme is believed to be ubiquinone. The sequence is that of NADH-ubiquinone oxidoreductase subunit 9 (NAD9) from Reclinomonas americana.